Consider the following 124-residue polypeptide: Fluoride-specific ion channel FluC (124 aa).

Transmembrane regions (helical) follow at residues 4 to 24 (FVLV…LSGV), 35 to 55 (YGTV…WGIL), 67 to 87 (LLLL…TYEG), and 100 to 120 (ALYI…GAGL). Gly75 and Thr78 together coordinate Na(+).

Belongs to the fluoride channel Fluc/FEX (TC 1.A.43) family.

The protein resides in the cell inner membrane. The catalysed reaction is fluoride(in) = fluoride(out). Na(+) is not transported, but it plays an essential structural role and its presence is essential for fluoride channel function. Functionally, fluoride-specific ion channel. Important for reducing fluoride concentration in the cell, thus reducing its toxicity. This is Fluoride-specific ion channel FluC from Nitratidesulfovibrio vulgaris (strain ATCC 29579 / DSM 644 / CCUG 34227 / NCIMB 8303 / VKM B-1760 / Hildenborough) (Desulfovibrio vulgaris).